A 68-amino-acid polypeptide reads, in one-letter code: Beta-defensin 1 (68 aa).

An N-terminal signal peptide occupies residues 1 to 21 (MRTSYLLLFTLCLLLSEMASG). The propeptide occupies 22-32 (DNFLTGLGHRS). Disulfide bonds link cysteine 37-cysteine 66, cysteine 44-cysteine 59, and cysteine 49-cysteine 67.

This sequence belongs to the beta-defensin family. Monomer. Homodimer.

Its subcellular location is the secreted. It is found in the membrane. Its function is as follows. Has bactericidal activity. May act as a ligand for C-C chemokine receptor CCR6. Positively regulates the sperm motility and bactericidal activity in a CCR6-dependent manner. Binds to CCR6 and triggers Ca2+ mobilization in the sperm which is important for its motility. The polypeptide is Beta-defensin 1 (DEFB1) (Macaca mulatta (Rhesus macaque)).